A 289-amino-acid polypeptide reads, in one-letter code: MSTTFKLDTSTSRANPTPAPMKRLTVPKIRARKKDGKTEEPLVMLTAYTARQAQLLDAHCDLLLVGDSLGQVIYGLPSTIPVTLRMMADHAAAVVRGSYHSVVVVDMPFGSYEQSPQQAFESASFLLKESGAAAVKLEGGEAMAETVAFLNQRGIPVMGHVGLTPQAVNVLGGYAARGRNDAEADKIVTDAKALDDAGAFAIVIEGVLEPIAVAATEAVRAPTIGIGASAQCDGQVLVTEDMLGMFERVPRFVKKYGDIAETIEATAKTYAEEVRARSFPGPEQLYQPK.

Over residues 1 to 15 (MSTTFKLDTSTSRAN) the composition is skewed to polar residues. The interval 1–21 (MSTTFKLDTSTSRANPTPAPM) is disordered. D67 and D106 together coordinate Mg(2+). Residues 67-68 (DS), D106, and K136 each bind 3-methyl-2-oxobutanoate. Residue E138 coordinates Mg(2+). E205 serves as the catalytic Proton acceptor.

Belongs to the PanB family. Homodecamer; pentamer of dimers. It depends on Mg(2+) as a cofactor.

Its subcellular location is the cytoplasm. It carries out the reaction 3-methyl-2-oxobutanoate + (6R)-5,10-methylene-5,6,7,8-tetrahydrofolate + H2O = 2-dehydropantoate + (6S)-5,6,7,8-tetrahydrofolate. Its pathway is cofactor biosynthesis; (R)-pantothenate biosynthesis; (R)-pantoate from 3-methyl-2-oxobutanoate: step 1/2. Catalyzes the reversible reaction in which hydroxymethyl group from 5,10-methylenetetrahydrofolate is transferred onto alpha-ketoisovalerate to form ketopantoate. The polypeptide is 3-methyl-2-oxobutanoate hydroxymethyltransferase (Erythrobacter litoralis (strain HTCC2594)).